Here is a 341-residue protein sequence, read N- to C-terminus: D-aspartate oxidase (341 aa).

Met-1 bears the Blocked amino end (Met) mark. 7 residues coordinate FAD: Asp-36, Lys-37, Thr-43, Ser-44, Met-50, Gly-307, and Ile-311. Positions 339 to 341 match the Microbody targeting signal motif; it reads SKL.

It belongs to the DAMOX/DASOX family. As to quaternary structure, monomer. Interacts with PEX5; the interaction is direct and required for localization of DDO to the peroxisome. FAD serves as cofactor. In terms of tissue distribution, in the kidney, expressed in epithelial cells of the proximal tubules and in the liver (at protein level).

The protein resides in the peroxisome matrix. It localises to the cytoplasm. Its subcellular location is the cytosol. The enzyme catalyses D-aspartate + O2 + H2O = oxaloacetate + H2O2 + NH4(+). The catalysed reaction is D-glutamate + O2 + H2O = H2O2 + 2-oxoglutarate + NH4(+). With respect to regulation, inhibited by phenylglyoxal; chemical modification of arginine residues in the enzyme with phenylglyoxal leads to the irreversible loss of activity towards dicarboxylic D-amino acids, paralleled by a transient appearance of activity versus monocarboxylic ones. Its function is as follows. Selectively catalyzes the oxidative deamination of acidic amino acids. Suppresses the level of D-aspartate in the brain, an amino acid that can act as an agonist for glutamate receptors. Protects the organism from the toxicity of D-amino acids. May also function in the intestine. The protein is D-aspartate oxidase (DDO) of Bos taurus (Bovine).